Here is an 822-residue protein sequence, read N- to C-terminus: Tyrosine-protein kinase Fer (822 aa).

The F-BAR domain maps to 1-259 (MGFGSDLKNS…SVEQIDPSTE (259 aa)). The important for interaction with membranes containing phosphoinositides stretch occupies residues 1-300 (MGFGSDLKNS…QANEIMWNNL (300 aa)). Coiled-coil stretches lie at residues 123–185 (AEMI…HNQY) and 301–390 (TAES…KVQE). Phosphotyrosine is present on Tyr-402. A Phosphoserine modification is found at Ser-434. Residues 460–550 (WYHGAIPRIE…KSGVVLLNPI (91 aa)) form the SH2 domain. Residues 563 to 816 (VILGELLGKG…FSELQKELTI (254 aa)) enclose the Protein kinase domain. ATP-binding positions include 569–577 (LGKGNFGEV) and Lys-591. Position 615 is a phosphotyrosine; by autocatalysis (Tyr-615). Asp-684 acts as the Proton acceptor in catalysis. The residue at position 714 (Tyr-714) is a Phosphotyrosine; by autocatalysis.

Belongs to the protein kinase superfamily. Tyr protein kinase family. Fes/fps subfamily. In terms of assembly, homotrimer. Interacts with ARHGDIA, IRS1, JAK1, NRP1, PIK3R1, PLEC and TMF1. Interacts with PPP1CA and regulates its phosphorylation at 'Thr-320'. Interacts with CTNND1, EGFR, FLT3, PECAM1, PDGFR and STAT3. Interacts (via SH2 domain) with CTTN. Interacts with HSP90; this stabilizes phosphorylated FER and protects FER against proteasomal degradation. Component of a complex that contains at least FER, CTTN and PTK2/FAK1. In terms of processing, autophosphorylated. Polyubiquitinated; this leads to proteasomal degradation. Isoform 1 is detected in normal colon and in fibroblasts (at protein level). Isoform 3 is detected in normal testis, in colon carcinoma-derived metastases in lung, liver and ovary, and in colon carcinoma and hepato carcinoma cell lines (at protein level). Isoform 3 is not detected in normal colon or in normal fibroblasts (at protein level). Widely expressed.

The protein resides in the cytoplasm. It is found in the cytoskeleton. It localises to the cell membrane. The protein localises to the cell projection. Its subcellular location is the cell junction. The protein resides in the membrane. It is found in the nucleus. It localises to the cell cortex. The catalysed reaction is L-tyrosyl-[protein] + ATP = O-phospho-L-tyrosyl-[protein] + ADP + H(+). Its activity is regulated as follows. Activated by phosphatidic acid binding. Activated by hydrogen peroxide (in vitro). Activated by reactive oxygen species (ROS). In terms of biological role, tyrosine-protein kinase that acts downstream of cell surface receptors for growth factors and plays a role in the regulation of the actin cytoskeleton, microtubule assembly, lamellipodia formation, cell adhesion, cell migration and chemotaxis. Acts downstream of EGFR, KIT, PDGFRA and PDGFRB. Acts downstream of EGFR to promote activation of NF-kappa-B and cell proliferation. May play a role in the regulation of the mitotic cell cycle. Plays a role in the insulin receptor signaling pathway and in activation of phosphatidylinositol 3-kinase. Acts downstream of the activated FCER1 receptor and plays a role in FCER1 (high affinity immunoglobulin epsilon receptor)-mediated signaling in mast cells. Plays a role in the regulation of mast cell degranulation. Plays a role in leukocyte recruitment and diapedesis in response to bacterial lipopolysaccharide (LPS). Plays a role in synapse organization, trafficking of synaptic vesicles, the generation of excitatory postsynaptic currents and neuron-neuron synaptic transmission. Plays a role in neuronal cell death after brain damage. Phosphorylates CTTN, CTNND1, PTK2/FAK1, GAB1, PECAM1 and PTPN11. May phosphorylate JUP and PTPN1. Can phosphorylate STAT3, but the biological relevance of this depends on cell type and stimulus. The sequence is that of Tyrosine-protein kinase Fer (FER) from Homo sapiens (Human).